Reading from the N-terminus, the 88-residue chain is Large ribosomal subunit protein bL31B (88 aa).

It belongs to the bacterial ribosomal protein bL31 family. Type B subfamily. As to quaternary structure, part of the 50S ribosomal subunit.

This chain is Large ribosomal subunit protein bL31B, found in Nocardia farcinica (strain IFM 10152).